The chain runs to 685 residues: MKYCTESLILILAVIGCISAAINFKCPKGTAEEKHQKEIYDLVQRINRPLIPQFKEPNFPTSFLIKGKDPKEFFQAIGHLPKKEVFSLFDERHWDEAMTAYEYLYEAETLDDFIDIAKILYLHLNEDMFYYVFSFAVLYRKDTRNVRLPQVHDVYPDKFLKTDIINKIKQANYQGKQHPVIDATKEFHDLRNPVSYLHYFLEDIGMNSHHYHWHVMNSALRKAYPTEGEKKFYRKGELFYHMHHQMLNRYELERLSNGLPRCPTFENWDDPIAEGYASHLAVDRTGYRYTFRPDNLHVRDLPELTKDNMRVWRDRIFDAATSCSVLRENGSFVKICRTRFYGGLNILGNLIESNLRSINRMFYGNIHCYAHVIAARVTDPDGKYGQGNGVMYDVATSARDPLFYQWHKFLDHFFYEHLTKLPTNHLFHLQNPDVSITNLEIISNGRKNEIHTFWENDIMEISKGHSFTLNSDAKVKIQHLQHEKFEIHLTVQNDKGEDTDLFVRIFLLPLEDEESHELSLEEMVRMAVDIEKRVIPAKPGSNDIVISSRSIGAPANKFFGSFEERYISEDCNFHSHCGWPNYLLVPKGSSQGTPFAFVVMLTLAEDDFTPNMDDTCFCADSWSHCGSLFIQYPENVEMGFPFQPIIECTKEEFFALPNIAKQEVIIKFTGETKDSPLVIQLENDS.

Positions 1-20 (MKYCTESLILILAVIGCISA) are cleaved as a signal peptide. His-210, His-214, and His-243 together coordinate Cu cation. N-linked (GlcNAc...) asparagine glycosylation occurs at Asn-329. Cu cation contacts are provided by His-367, His-371, and His-407. Cys-577 and Cys-625 are disulfide-bonded.

The protein belongs to the tyrosinase family. Hemocyanin subfamily.

Its subcellular location is the secreted. The protein resides in the extracellular space. Functionally, hemocyanins are copper-containing oxygen carriers occurring freely dissolved in the hemolymph of many mollusks and arthropods. The chain is Hemocyanin subunit X (HCX) from Scutigera coleoptrata (House centipede).